The following is a 311-amino-acid chain: Glutaminase (311 aa).

Residues S66, N116, E162, N169, Y193, Y245, and V263 each coordinate substrate.

It belongs to the glutaminase family. As to quaternary structure, homotetramer.

It carries out the reaction L-glutamine + H2O = L-glutamate + NH4(+). The chain is Glutaminase from Rhodopseudomonas palustris (strain ATCC BAA-98 / CGA009).